We begin with the raw amino-acid sequence, 104 residues long: Circadian clock oscillator protein KaiB (104 aa).

This sequence belongs to the KaiB family. As to quaternary structure, the KaiABC complex composition changes during the circadian cycle to control KaiC phosphorylation. Complexes KaiC(6), KaiA(2-4):KaiC(6), KaiB(6):KaiC(6) and KaiC(6):KaiB(6):KaiA(12) are among the most important forms, many form cooperatively. Undergoes a major conformational rearrangment; in the free state forms homotetramers as a dimer of dimers. When bound to the CI domain of KaiC switches to a monomeric thioredoxin-fold (KaiB(fs)). KaiB(fs) binds CikA, leading it to dephosphorylate phospho-RpaA.

In terms of biological role, key component of the KaiABC oscillator complex, which constitutes the main circadian regulator in cyanobacteria. Complex composition changes during the circadian cycle to control KaiC phosphorylation. KaiA stimulates KaiC autophosphorylation, while KaiB sequesters KaiA, leading to KaiC autodephosphorylation. Phospho-Ser-431 KaiC accumulation triggers binding of KaiB to form the KaiB(6):KaiC(6) complex, leading to changes in output regulators CikA and SasA. KaiB switches to a thioredoxin-like fold (KaiB(fs)) when bound to KaiC. KaiB(6):KaiC(6) formation exposes a site for KaiA binding that sequesters KaiA from KaiC, making the KaiC(6):KaiB(6):KaiA(12) complex that results in KaiC autodephosphorylation. Functionally, a metamorphic protein which reversibly switches between an inactive tetrameric fold and a rare, thioredoxin-like monomeric fold (KaiB(fs)). KaiB(fs) binds phospho-KaiC, KaiA and CikA. KaiA and CikA compete for binding to KaiB(fs), and KaiB(fs) and SasA compete for binding to KaiC, thus the clock oscillator and output signal pathway are tightly coupled. This Acaryochloris marina (strain MBIC 11017) protein is Circadian clock oscillator protein KaiB.